Consider the following 428-residue polypeptide: Histone deacetylase 3 (428 aa).

Residues 3–316 (KTVAYFYDPD…WTYETSLLVE (314 aa)) form a histone deacetylase region. The 1D-myo-inositol 1,4,5,6-tetrakisphosphate site is built by H17, G21, and K25. The active site involves H135. Residues D170, H172, and D259 each coordinate Zn(2+). Residue R265 coordinates 1D-myo-inositol 1,4,5,6-tetrakisphosphate. Basic and acidic residues-rich tracts occupy residues 388–405 (DRTD…ENYS) and 415–428 (DGDH…DVEI). The interval 388–428 (DRTDEADAEERGPEENYSRPEAPNEFYDGDHDNDKESDVEI) is disordered. S424 carries the post-translational modification Phosphoserine.

The protein belongs to the histone deacetylase family. HD type 1 subfamily. Interacts with HDAC7 and HDAC9. Interacts with DAXX, KDM4A, HDAC10 and DACH1. Found in a complex with NCOR1 and NCOR2. Component of the N-Cor repressor complex, at least composed of NCOR1, NCOR2, HDAC3, TBL1X, TBL1R, CORO2A and GPS2. Interacts with BCOR, MJD2A/JHDM3A, NRIP1, PRDM6 and SRY. Interacts with BTBD14B. Interacts with GLIS2. Interacts (via the DNA-binding domain) with NR2C1; the interaction recruits phosphorylated NR2C1 to PML bodies for sumoylation. Component of the Notch corepressor complex. Interacts with CBFA2T3 and NKAP. Interacts with APEX1; the interaction is not dependent on the acetylated status of APEX1. Interacts with ZMYND15. Interacts with SMRT/NCOR2 and BCL6 on DNA enhancer elements. Interacts with INSM1. Interacts with XBP1 isoform 1; the interaction occurs in endothelial cell (EC) under disturbed flow. Interacts (via C-terminus) with CCAR2 (via N-terminus). Interacts with and deacetylates MEF2D. Interacts with BEND3. Interacts with NKAPL. Interacts with DHX36; this interaction occurs in a RNA-dependent manner. Interacts weakly with CRY1; this interaction is enhanced in the presence of FBXL3. Interacts with FBXL3 and BMAL1. Interacts with NCOR1. Interacts with RARA. Interacts with SETD5. In terms of assembly, (Microbial infection) Interacts with human cytomegalovirus (HHV-5) immediate early protein IE1; this interaction decreases histone acetylation and allows transcriptional activation by the virus. Requires Zn(2+) as cofactor. Sumoylated in vitro. Post-translationally, deubiquitinated on 'Lys-63'-linked ubiquitin chains by USP38; leading to a decreased level of histone acetylation. In terms of tissue distribution, widely expressed.

Its subcellular location is the nucleus. The protein localises to the chromosome. The protein resides in the cytoplasm. It is found in the cytosol. It catalyses the reaction N(6)-acetyl-L-lysyl-[histone] + H2O = L-lysyl-[histone] + acetate. It carries out the reaction N(6)-acetyl-L-lysyl-[protein] + H2O = L-lysyl-[protein] + acetate. The catalysed reaction is N(6)-(2E)-butenoyl-L-lysyl-[protein] + H2O = (2E)-2-butenoate + L-lysyl-[protein]. The enzyme catalyses N(6)-(2-hydroxyisobutanoyl)-L-lysyl-[protein] + H2O = 2-hydroxy-2-methylpropanoate + L-lysyl-[protein]. It catalyses the reaction N(6)-[(S)-lactoyl]-L-lysyl-[protein] + H2O = (S)-lactate + L-lysyl-[protein]. Inositol tetraphosphate (1D-myo-inositol 1,4,5,6-tetrakisphosphate) promotes the histone deacetylase activity by acting as an intermolecular glue between HDAC3 and NCOR2, thereby promoting its association with the N-Cor complex, a prerequisite for the histone deacetylase activity. Functionally, histone deacetylase that catalyzes the deacetylation of lysine residues on the N-terminal part of the core histones (H2A, H2B, H3 and H4), and some other non-histone substrates. Histone deacetylation gives a tag for epigenetic repression and plays an important role in transcriptional regulation, cell cycle progression and developmental events. Histone deacetylases act via the formation of large multiprotein complexes, such as N-Cor repressor complex, which activate the histone deacetylase activity. Participates in the BCL6 transcriptional repressor activity by deacetylating the H3 'Lys-27' (H3K27) on enhancer elements, antagonizing EP300 acetyltransferase activity and repressing proximal gene expression. Acts as a molecular chaperone for shuttling phosphorylated NR2C1 to PML bodies for sumoylation. Contributes, together with XBP1 isoform 1, to the activation of NFE2L2-mediated HMOX1 transcription factor gene expression in a PI(3)K/mTORC2/Akt-dependent signaling pathway leading to endothelial cell (EC) survival under disturbed flow/oxidative stress. Regulates both the transcriptional activation and repression phases of the circadian clock in a deacetylase activity-independent manner. During the activation phase, promotes the accumulation of ubiquitinated BMAL1 at the E-boxes and during the repression phase, blocks FBXL3-mediated CRY1/2 ubiquitination and promotes the interaction of CRY1 and BMAL1. The NCOR1-HDAC3 complex regulates the circadian expression of the core clock gene BMAL1 and the genes involved in lipid metabolism in the liver. Also functions as a deacetylase for non-histone targets, such as KAT5, MEF2D, MAPK14, RARA and STAT3. Serves as a corepressor of RARA, mediating its deacetylation and repression, leading to inhibition of RARE DNA element binding. In association with RARA, plays a role in the repression of microRNA-10a and thereby in the inflammatory response. In addition to protein deacetylase activity, also acts as a protein-lysine deacylase by recognizing other acyl groups: catalyzes removal of (2E)-butenoyl (crotonyl), lactoyl (lactyl) and 2-hydroxyisobutanoyl (2-hydroxyisobutyryl) acyl groups from lysine residues, leading to protein decrotonylation, delactylation and de-2-hydroxyisobutyrylation, respectively. Catalyzes decrotonylation of MAPRE1/EB1. Mediates delactylation NBN/NBS1, thereby inhibiting DNA double-strand breaks (DSBs) via homologous recombination (HR). This Homo sapiens (Human) protein is Histone deacetylase 3 (HDAC3).